We begin with the raw amino-acid sequence, 1269 residues long: MKNDVVRWSRQPTSNTTNSSSSSRSDSNSTHKHRSKSNKLNARQLGSNAARSCQQRSSVATTLEDEQQTIIECDIGNFNFDCNLFKTSFLTQHKQKRSGKSSSKSKSNRSRPLAKTKAVFLLALQFSAVVFLCNINVGFVAGSVATAASSAGGSSPAAPSSAPSSPPTVAVPPPPPPSSALKVDPNGQSPVLPPYVLDYETGGKAKLTPNNGKFGQSGSSGSNNNHIVGHYTHTWAVHIPNGDNGMADAVAKDHGFVNLGKIFDDHYHFAHHKVSKRSLSPATHHQTRLDDDDRVHWAKQQRAKSRSKRDFIRMRPSRTSSRAMSMVDAMSFNDSKWPQMWYLNRGGGLDMNVIPAWKMGITGKGVVVTILDDGLESDHPDIQDNYDPKASYDVNSHDDDPMPHYDMTDSNRHGTRCAGEVAATANNSFCAVGIAYGASVGGVRMLDGDVTDAVEARSLSLNPQHIDIYSASWGPDDDGKTVDGPGELASRAFIEGTTKGRGGKGSIFIWASGNGGREQDNCNCDGYTNSIWTLSISSATEEGHVPWYSEKCSSTLATTYSSGGQGEKQVVTTDLHHSCTVSHTGTSASAPLAAGIAALVLQSNQNLTWRDLQHIVVRTAKPANLKDPSWSRNGVGRRVSHSFGYGLMDAAEMVRVARNWKAVPEQQRCEINAPHVDKVIPPRTHITLQLTVNHCRSVNYLEHVQAKITLTSQRRGDIQLFLRSPANTSVTLLTPRIHDNSRSGFNQWPFMSVHTWGESPQGNWQLEIHNEGRYMGHALLREWSLIFYGTTQSIGPNDPISVPKPSGSEATTPNSSSTTSNLHQAYSPQYPRIPPNNFGSSPSGGSKLPLGKVPPPNKSSYVTNNPLLNSAPPKQGYQQISATYGVILGKANGKSNNNSKEKTNNKGNKSNNGNKGKSGGSSGNRKEQTTQSTIIQTSTSKNKYYRISQQQQQKNNKQDRNGVQTQRPKANSGEKSYDEKSRKVVGEITTNSGNGSIKAAKQVKESTTTSSNSRIPKLFERYEKIQAIFPELEPYENSSPKGKPKQAKQGKQFEVDLFKPTNGGNSRQGNTKKSPSVPPPSQTMATLSILPILPAGGSSFLPDQKILKKQQLLMAAAGVMAPAQVEVEMEEVHATPDYEARKDQRKEVNGPNAQITQWDMIFYGTETPAQPDDVANPSQSNQFNLYGNDMAHNDVEYDSTGQWRNMQQVGEVGMTRDHSNTAACLKWSDRKCLGLSLLFFMIMQVFFLNFKHANDNNNKNKNNIIKCIR.

The disordered stretch occupies residues 1–57; the sequence is MKNDVVRWSRQPTSNTTNSSSSSRSDSNSTHKHRSKSNKLNARQLGSNAARSCQQRS. A compositionally biased stretch (low complexity) spans 13–28; that stretch reads TSNTTNSSSSSRSDSN. N-linked (GlcNAc...) asparagine glycans are attached at residues Asn-15, Asn-18, and Asn-28. Positions 38-57 are enriched in polar residues; the sequence is NKLNARQLGSNAARSCQQRS. Asn-108 carries an N-linked (GlcNAc...) asparagine glycan. A helical membrane pass occupies residues 119–139; that stretch reads VFLLALQFSAVVFLCNINVGF. A compositionally biased stretch (low complexity) spans 150–163; it reads SAGGSSPAAPSSAP. Residues 150-187 form a disordered region; the sequence is SAGGSSPAAPSSAPSSPPTVAVPPPPPPSSALKVDPNG. Pro residues predominate over residues 164–178; the sequence is SSPPTVAVPPPPPPS. Residue Asn-333 is glycosylated (N-linked (GlcNAc...) asparagine). Positions 340–654 constitute a Peptidase S8 domain; the sequence is MWYLNRGGGL…YGLMDAAEMV (315 aa). Catalysis depends on charge relay system residues Asp-372 and His-413. Asn-426 carries N-linked (GlcNAc...) asparagine glycosylation. 2 cysteine pairs are disulfide-bonded: Cys-430–Cys-579 and Cys-522–Cys-552. Ser-587 serves as the catalytic Charge relay system. Asn-606 carries an N-linked (GlcNAc...) asparagine glycan. Positions 662-793 constitute a P/Homo B domain; it reads AVPEQQRCEI…SLIFYGTTQS (132 aa). A disulfide bridge connects residues Cys-669 and Cys-695. Residues Asn-727 and Asn-814 are each glycosylated (N-linked (GlcNAc...) asparagine). 4 disordered regions span residues 796-875, 891-1015, 1031-1050, and 1057-1083; these read PNDP…PPKQ, ANGK…NSRI, ELEPYENSSPKGKPKQAKQG, and LFKPTNGGNSRQGNTKKSPSVPPPSQT. 2 stretches are compositionally biased toward low complexity: residues 811–821 and 835–851; these read TTPNSSSTTSN and PNNFGSSPSGGSKLPLG. Residue Asn-857 is glycosylated (N-linked (GlcNAc...) asparagine). A compositionally biased stretch (polar residues) spans 858–868; it reads KSSYVTNNPLL. Residues Asn-897 and Asn-908 are each glycosylated (N-linked (GlcNAc...) asparagine). Low complexity-rich tracts occupy residues 905–915 and 929–940; these read NKGNKSNNGNK and TTQSTIIQTSTS. The span at 975–985 shows a compositional bias: basic and acidic residues; sequence KSYDEKSRKVV. Asn-994 carries an N-linked (GlcNAc...) asparagine glycan. Residues 1005 to 1014 show a composition bias toward polar residues; it reads ESTTTSSNSR. The span at 1062 to 1074 shows a compositional bias: polar residues; that stretch reads NGGNSRQGNTKKS. The helical transmembrane segment at 1233-1253 threads the bilayer; it reads LGLSLLFFMIMQVFFLNFKHA.

Belongs to the peptidase S8 family. Furin subfamily. Ca(2+) serves as cofactor. In terms of tissue distribution, in adults, isoform 1-X is expressed in CNS, fat body and female reproductive tissues, and in embryos, in CNS, tracheal pits, hindgut, posterior spiracles and anal pads.

Its subcellular location is the golgi apparatus membrane. It carries out the reaction Release of mature proteins from their proproteins by cleavage of -Arg-Xaa-Yaa-Arg-|-Zaa- bonds, where Xaa can be any amino acid and Yaa is Arg or Lys. Releases albumin, complement component C3 and von Willebrand factor from their respective precursors.. Its function is as follows. Furin is likely to represent the ubiquitous endoprotease activity within constitutive secretory pathways and capable of cleavage at the RX(K/R)R consensus motif. In Drosophila melanogaster (Fruit fly), this protein is Furin-like protease 1, isoforms 1/1-X/2 (Fur1).